A 280-amino-acid chain; its full sequence is MTFVRQILRNHDIKPVKRLGQCFLADFSVMKKIVELAEIKEDETIVEIGSGLGLMTSLMAERAAWVHAVEIDGKLVSVLKERLKEYHNVTVIHGDILKYDFLTALGENSVKKIKIIGNIPYSISSPILFHILDHRKQISTAVLMMQKEVADRLCAVPGTKAYGIPTVLFGLYARISRELTVAPGCFYPKPEVTSTVVKMLIPEEPLYWVENDALFFRLVKAAFAQRRKTLLNNMKNAHWKDCDAGRIENLLRDMGAGEKIRAEELSIQQFAALCNSLSYS.

Leu-24, Gly-49, Glu-70, Asp-95, and Asn-118 together coordinate S-adenosyl-L-methionine.

The protein belongs to the class I-like SAM-binding methyltransferase superfamily. rRNA adenine N(6)-methyltransferase family. RsmA subfamily.

The protein localises to the cytoplasm. The enzyme catalyses adenosine(1518)/adenosine(1519) in 16S rRNA + 4 S-adenosyl-L-methionine = N(6)-dimethyladenosine(1518)/N(6)-dimethyladenosine(1519) in 16S rRNA + 4 S-adenosyl-L-homocysteine + 4 H(+). In terms of biological role, specifically dimethylates two adjacent adenosines (A1518 and A1519) in the loop of a conserved hairpin near the 3'-end of 16S rRNA in the 30S particle. May play a critical role in biogenesis of 30S subunits. The protein is Ribosomal RNA small subunit methyltransferase A of Syntrophus aciditrophicus (strain SB).